The sequence spans 154 residues: Large ribosomal subunit protein uL30 (154 aa).

Residues 114–146 are disordered; the sequence is PTLRLHPPRGGHDGVKHPVKEGGQLGKHDTEGI. Over residues 123–144 the composition is skewed to basic and acidic residues; the sequence is GGHDGVKHPVKEGGQLGKHDTE.

Belongs to the universal ribosomal protein uL30 family. In terms of assembly, part of the 50S ribosomal subunit. Binds 5S rRNA.

Functionally, this is one of 5 proteins that mediate the attachment of the 5S rRNA onto the large ribosomal subunit, stabilizing the orientation of adjacent RNA domains. The protein is Large ribosomal subunit protein uL30 of Haloarcula marismortui (strain ATCC 43049 / DSM 3752 / JCM 8966 / VKM B-1809) (Halobacterium marismortui).